Consider the following 223-residue polypeptide: PKHD-type hydroxylase CPS_3426 (223 aa).

The region spanning 77–175 (KSMMPFIISE…RKVALTWIES (99 aa)) is the Fe2OG dioxygenase domain. Fe cation contacts are provided by H96, D98, and H156. R166 lines the 2-oxoglutarate pocket.

Fe(2+) is required as a cofactor. The cofactor is L-ascorbate.

The protein is PKHD-type hydroxylase CPS_3426 of Colwellia psychrerythraea (strain 34H / ATCC BAA-681) (Vibrio psychroerythus).